The sequence spans 362 residues: Heat-inducible transcription repressor HrcA (362 aa).

It belongs to the HrcA family.

Negative regulator of class I heat shock genes (grpE-dnaK-dnaJ and groELS operons). Prevents heat-shock induction of these operons. The sequence is that of Heat-inducible transcription repressor HrcA from Nitrobacter winogradskyi (strain ATCC 25391 / DSM 10237 / CIP 104748 / NCIMB 11846 / Nb-255).